We begin with the raw amino-acid sequence, 180 residues long: NADH-quinone oxidoreductase subunit I (180 aa).

2 consecutive 4Fe-4S ferredoxin-type domains span residues 48 to 80 and 90 to 119; these read IVLT…LQKA and EFFR…LTPD. Cysteine 60, cysteine 63, cysteine 66, cysteine 70, cysteine 99, cysteine 102, cysteine 105, and cysteine 109 together coordinate [4Fe-4S] cluster.

It belongs to the complex I 23 kDa subunit family. As to quaternary structure, NDH-1 is composed of 13 different subunits. Subunits NuoA, H, J, K, L, M, N constitute the membrane sector of the complex. The cofactor is [4Fe-4S] cluster.

The protein localises to the cell inner membrane. It catalyses the reaction a quinone + NADH + 5 H(+)(in) = a quinol + NAD(+) + 4 H(+)(out). In terms of biological role, NDH-1 shuttles electrons from NADH, via FMN and iron-sulfur (Fe-S) centers, to quinones in the respiratory chain. The immediate electron acceptor for the enzyme in this species is believed to be ubiquinone. Couples the redox reaction to proton translocation (for every two electrons transferred, four hydrogen ions are translocated across the cytoplasmic membrane), and thus conserves the redox energy in a proton gradient. This Cronobacter sakazakii (strain ATCC BAA-894) (Enterobacter sakazakii) protein is NADH-quinone oxidoreductase subunit I.